Reading from the N-terminus, the 600-residue chain is NADH-quinone oxidoreductase subunit C/D (600 aa).

An NADH dehydrogenase I subunit C region spans residues methionine 1–glutamine 190. The tract at residues aspartate 214 to arginine 600 is NADH dehydrogenase I subunit D.

The protein in the N-terminal section; belongs to the complex I 30 kDa subunit family. This sequence in the C-terminal section; belongs to the complex I 49 kDa subunit family. As to quaternary structure, NDH-1 is composed of 13 different subunits. Subunits NuoB, CD, E, F, and G constitute the peripheral sector of the complex.

It is found in the cell inner membrane. It carries out the reaction a quinone + NADH + 5 H(+)(in) = a quinol + NAD(+) + 4 H(+)(out). NDH-1 shuttles electrons from NADH, via FMN and iron-sulfur (Fe-S) centers, to quinones in the respiratory chain. The immediate electron acceptor for the enzyme in this species is believed to be ubiquinone. Couples the redox reaction to proton translocation (for every two electrons transferred, four hydrogen ions are translocated across the cytoplasmic membrane), and thus conserves the redox energy in a proton gradient. The sequence is that of NADH-quinone oxidoreductase subunit C/D from Escherichia coli (strain ATCC 8739 / DSM 1576 / NBRC 3972 / NCIMB 8545 / WDCM 00012 / Crooks).